A 106-amino-acid polypeptide reads, in one-letter code: MCIGIPLRVLECAPGRALCGDENGVRWIDTRLVEPPAPGDWLLVFLDAAREILDAGRAARIREALRALQAVQAGDPAALAGLFADLDREPQLPPHLQAQLPPKEPT.

It belongs to the HupF/HypC family.

The chain is Hydrogenase expression/formation protein HoxL (hoxL) from Azotobacter vinelandii.